Here is a 987-residue protein sequence, read N- to C-terminus: VPS35 endosomal protein sorting factor-like (987 aa).

Residues 1–23 (MAERQSASSPTPSSPPQQQQQTP) show a composition bias toward low complexity. Residues 1-115 (MAERQSASSP…DPLNNPLEKK (115 aa)) are disordered. The segment covering 43–63 (NGREVERHPLNSITKTEDTGK) has biased composition (basic and acidic residues). Residues 66–111 (QSSLSSNASSLQSAAAAASSSTATTDIDPLNNNNNNNTDIDPLNNP) show a composition bias toward low complexity.

This sequence belongs to the VPS35L family. Component of the heterotrimeric retriever complex.

The protein resides in the endosome. Its function is as follows. Acts as a component of the retriever complex. The retriever complex is a heterotrimeric complex related to retromer cargo-selective complex (CSC) and essential for retromer-independent retrieval and recycling of numerous cargos. The chain is VPS35 endosomal protein sorting factor-like from Dictyostelium discoideum (Social amoeba).